Consider the following 265-residue polypeptide: Cyclin-B2-5 (265 aa).

The protein belongs to the cyclin family. Cyclin AB subfamily.

In Arabidopsis thaliana (Mouse-ear cress), this protein is Cyclin-B2-5 (CYCB2-5).